Reading from the N-terminus, the 298-residue chain is Elongation factor Ts (298 aa).

The involved in Mg(2+) ion dislocation from EF-Tu stretch occupies residues 79 to 82 (TDFV).

This sequence belongs to the EF-Ts family.

Its subcellular location is the cytoplasm. In terms of biological role, associates with the EF-Tu.GDP complex and induces the exchange of GDP to GTP. It remains bound to the aminoacyl-tRNA.EF-Tu.GTP complex up to the GTP hydrolysis stage on the ribosome. The polypeptide is Elongation factor Ts (tsf) (Mycoplasma pneumoniae (strain ATCC 29342 / M129 / Subtype 1) (Mycoplasmoides pneumoniae)).